Here is a 346-residue protein sequence, read N- to C-terminus: Sulfate/thiosulfate import ATP-binding protein CysA 1 (346 aa).

The ABC transporter domain occupies 3–237 (VKVSGITKQF…PNSPFVFSFI (235 aa)). 35 to 42 (GPSGSGKT) serves as a coordination point for ATP.

This sequence belongs to the ABC transporter superfamily. Sulfate/tungstate importer (TC 3.A.1.6) family. In terms of assembly, the complex is composed of two ATP-binding proteins (CysA), two transmembrane proteins (CysT and CysW) and a solute-binding protein (CysP).

Its subcellular location is the cell inner membrane. It carries out the reaction sulfate(out) + ATP + H2O = sulfate(in) + ADP + phosphate + H(+). It catalyses the reaction thiosulfate(out) + ATP + H2O = thiosulfate(in) + ADP + phosphate + H(+). Functionally, part of the ABC transporter complex CysAWTP involved in sulfate/thiosulfate import. Responsible for energy coupling to the transport system. The sequence is that of Sulfate/thiosulfate import ATP-binding protein CysA 1 from Agrobacterium fabrum (strain C58 / ATCC 33970) (Agrobacterium tumefaciens (strain C58)).